A 434-amino-acid polypeptide reads, in one-letter code: ATP-dependent protease ATPase subunit HslU (434 aa).

Residues V18, 60–65, D247, E312, and R384 each bind ATP; that span reads GVGKTE.

It belongs to the ClpX chaperone family. HslU subfamily. As to quaternary structure, a double ring-shaped homohexamer of HslV is capped on each side by a ring-shaped HslU homohexamer. The assembly of the HslU/HslV complex is dependent on binding of ATP.

Its subcellular location is the cytoplasm. Functionally, ATPase subunit of a proteasome-like degradation complex; this subunit has chaperone activity. The binding of ATP and its subsequent hydrolysis by HslU are essential for unfolding of protein substrates subsequently hydrolyzed by HslV. HslU recognizes the N-terminal part of its protein substrates and unfolds these before they are guided to HslV for hydrolysis. The sequence is that of ATP-dependent protease ATPase subunit HslU from Bradyrhizobium diazoefficiens (strain JCM 10833 / BCRC 13528 / IAM 13628 / NBRC 14792 / USDA 110).